A 29-amino-acid polypeptide reads, in one-letter code: Glucagon (29 aa).

Belongs to the glucagon family.

The protein resides in the secreted. In terms of biological role, glucagon plays a key role in glucose metabolism and homeostasis. Regulates blood glucose by increasing gluconeogenesis and decreasing glycolysis. This is Glucagon (gcg) from Callorhinchus milii (Ghost shark).